The sequence spans 71 residues: Alpha-cobratoxin (71 aa).

Intrachain disulfides connect Cys3–Cys20, Cys14–Cys41, Cys26–Cys30, Cys45–Cys56, and Cys57–Cys62.

Belongs to the three-finger toxin family. Long-chain subfamily. Type II alpha-neurotoxin sub-subfamily. Monomer, homo- or heterodimer with cytotoxins 1 (P60305), 2 (AC P01445), and 3 (AC P01446); disulfide-linked. Post-translationally, in homodimer alpha-cobratoxin, selective reduction of Cys(26)-Cys(30) in one subunit does not affect the activity against the alpha-7/CHRNA7 nAChR, whereas its reduction in both subunits almost prevents alpha-7/CHRNA7 nAChR recognition. On the contrary, reduction of one or both Cys(26)-Cys(30) disulfide bonds in the homodimer considerably potentiates inhibition of the alpha-3-beta-2/CHRNA3-CHRNB2 nAChR by the toxin. In terms of tissue distribution, expressed by the venom gland.

The protein localises to the secreted. Functionally, monomer: binds with high affinity to muscular (alpha-1-beta-1-gamma-delta/CHRNA1-CHRNB1-CHRNG-CHRND) nAChR (tested on Torpedo californica, Kd=0.2-4.5 nM) and neuronal alpha-7/CHRNA7 nicotinic acetylcholine receptors (Kd=13-105 nM). Also inhibits GABA(A) channels. Heteropentamer targets studied are composed of alpha-1-beta-3-gamma-2 (GABRA1-GABRB3-GABRG2) subunits (IC(50)=236 nM), alpha-1-beta-2-gamma-2 (GABRA1-GABRB2-GABRG2) subunits (IC(50)=469 nM), alpha-2-beta-2-gamma-2 (GABRA2-GABRB2-GABRG2) subunits (IC(50)=485 nM), alpha-5-beta-3-gamma-2 (GABRA5-GABRB3-GABRG2) subunits (IC(50)=635 nM), and alpha-2-beta-3-gamma-2 (GABRA2-GABRB3-GABRG2) subunits (IC(50)=1099 nM) (activated by 10 uM GABA). In terms of biological role, homodimer: binds with high affinity (but lower than the monomeric form) to muscular (IC(50)=9.7 nM) and with low affinity to neuronal alpha-7/CHRNA7 nAChRs (IC(50)=1370 nM). However, it acquires (compared to the monomeric form) the capacity to block alpha-3/beta-2 (CHRNA3/CHRNB2) nAChRs. Heterodimer with cytotoxin 3 (AC P01446): is slightly more active than the homodimer in inhibiting alpha-7/CHRNA7 nAChR and is considerably more active in blocking the alpha-3-beta-2/CHRNA3-CHRNB2 nAChR. In Naja kaouthia (Monocled cobra), this protein is Alpha-cobratoxin.